The chain runs to 178 residues: Zinc finger CCHC domain-containing protein 10 (178 aa).

Residues 21-38 form a CCHC-type zinc finger; the sequence is VRCQKCLEFGHWTYECKG. The segment at 66–178 is disordered; sequence QSIGETNIEK…EPQKKKKKKK (113 aa). Low complexity-rich tracts occupy residues 85-113 and 121-164; these read SVTS…SSSS and SLSS…SSES.

In Mus musculus (Mouse), this protein is Zinc finger CCHC domain-containing protein 10 (Zcchc10).